The sequence spans 245 residues: Probable phosphatase YcdX (245 aa).

Zn(2+) contacts are provided by His-7, His-9, His-15, His-40, Glu-73, His-101, His-131, Asp-192, and His-194.

This sequence belongs to the PHP family. As to quaternary structure, homotrimer. It depends on Zn(2+) as a cofactor.

The sequence is that of Probable phosphatase YcdX from Shigella flexneri serotype 5b (strain 8401).